The sequence spans 317 residues: Uridylate kinase (317 aa).

ATP is bound at residue lysine 9 to glycine 12. A UMP-binding site is contributed by glycine 49. ATP is bound by residues glycine 50 and arginine 54. Residues aspartate 69 and threonine 130 to threonine 137 each bind UMP. ATP-binding residues include asparagine 158, tyrosine 164, and aspartate 167.

Belongs to the UMP kinase family. In terms of assembly, homohexamer.

It localises to the cytoplasm. The catalysed reaction is UMP + ATP = UDP + ADP. It functions in the pathway pyrimidine metabolism; CTP biosynthesis via de novo pathway; UDP from UMP (UMPK route): step 1/1. Its activity is regulated as follows. Inhibited by UTP. Its function is as follows. Catalyzes the reversible phosphorylation of UMP to UDP. This chain is Uridylate kinase, found in Malacoplasma penetrans (strain HF-2) (Mycoplasma penetrans).